We begin with the raw amino-acid sequence, 531 residues long: O-phosphoserine--tRNA(Cys) ligase (531 aa).

Residues 189–191, 234–236, 276–277, and Asn319 each bind substrate; these read HMT, SAS, and YY.

The protein belongs to the class-II aminoacyl-tRNA synthetase family. O-phosphoseryl-tRNA(Cys) synthetase subfamily. In terms of assembly, homotetramer. Interacts with SepCysS.

It carries out the reaction tRNA(Cys) + O-phospho-L-serine + ATP = O-phospho-L-seryl-tRNA(Cys) + AMP + diphosphate. In terms of biological role, catalyzes the attachment of O-phosphoserine (Sep) to tRNA(Cys). The protein is O-phosphoserine--tRNA(Cys) ligase of Methanoculleus marisnigri (strain ATCC 35101 / DSM 1498 / JR1).